Reading from the N-terminus, the 771-residue chain is Polyribonucleotide nucleotidyltransferase (771 aa).

Residues D487 and D493 each coordinate Mg(2+). One can recognise a KH domain in the interval 554-613; sequence PRIETMQIDKAKIRDVIGTGGKVIREIVATTGAKVDIDDEGLIKISSSDLDQIEAARKWI. In terms of domain architecture, S1 motif spans 623-691; it reads GKIYDGKVVN…PRGKVRLSMR (69 aa). The interval 696–771 is disordered; the sequence is ETGAELEDTR…QGHVPDFLKD (76 aa). The segment covering 702–771 has biased composition (basic and acidic residues); the sequence is EDTRPAREPR…QGHVPDFLKD (70 aa).

The protein belongs to the polyribonucleotide nucleotidyltransferase family. Requires Mg(2+) as cofactor.

It is found in the cytoplasm. The catalysed reaction is RNA(n+1) + phosphate = RNA(n) + a ribonucleoside 5'-diphosphate. Its function is as follows. Involved in mRNA degradation. Catalyzes the phosphorolysis of single-stranded polyribonucleotides processively in the 3'- to 5'-direction. This is Polyribonucleotide nucleotidyltransferase from Sphingopyxis alaskensis (strain DSM 13593 / LMG 18877 / RB2256) (Sphingomonas alaskensis).